We begin with the raw amino-acid sequence, 249 residues long: 3-deoxy-D-manno-octulosonic acid kinase (249 aa).

Residue D175 is part of the active site.

It belongs to the protein kinase superfamily. KdkA/RfaP family.

It localises to the cell inner membrane. The catalysed reaction is an alpha-Kdo-(2-&gt;6)-lipid IVA + ATP = a 4-O-phospho-alpha-Kdo-(2-&gt;6)-lipid IVA + ADP + H(+). Its pathway is bacterial outer membrane biogenesis; LPS core biosynthesis. Catalyzes the ATP-dependent phosphorylation of the 3-deoxy-D-manno-octulosonic acid (Kdo) residue in Kdo-lipid IV(A) at the 4-OH position. In Stenotrophomonas maltophilia (strain K279a), this protein is 3-deoxy-D-manno-octulosonic acid kinase.